A 209-amino-acid polypeptide reads, in one-letter code: MSRVVVIDHPLIQHKLSIIRDKDTGPKEFRELVNEIAMLMAYEVTRDLPTEEVEVDTPIARARCRRLAGEKLGLIPILRAGLGMVQGILSLYPTARVGHIGLYRDPDTLKPVEYYCKLPTDLGERELLVLDPMLATGGSVVASLDLIKRQGGRRIKLLCLIAAPEGVQAVQEAHPDVDIYLAALDEMLNEHAYIVPGLGDAGDRLFGTK.

5-phospho-alpha-D-ribose 1-diphosphate is bound by residues R79, R104, and D131 to S139. Uracil contacts are provided by residues I194 and G199–A201. D200 serves as a coordination point for 5-phospho-alpha-D-ribose 1-diphosphate.

The protein belongs to the UPRTase family. Mg(2+) serves as cofactor.

It catalyses the reaction UMP + diphosphate = 5-phospho-alpha-D-ribose 1-diphosphate + uracil. It participates in pyrimidine metabolism; UMP biosynthesis via salvage pathway; UMP from uracil: step 1/1. Its activity is regulated as follows. Allosterically activated by GTP. Its function is as follows. Catalyzes the conversion of uracil and 5-phospho-alpha-D-ribose 1-diphosphate (PRPP) to UMP and diphosphate. The protein is Uracil phosphoribosyltransferase of Symbiobacterium thermophilum (strain DSM 24528 / JCM 14929 / IAM 14863 / T).